Consider the following 145-residue polypeptide: Sec-independent protein translocase protein TatB (145 aa).

A helical transmembrane segment spans residues methionine 1 to glycine 21.

The protein belongs to the TatB family. As to quaternary structure, the Tat system comprises two distinct complexes: a TatABC complex, containing multiple copies of TatA, TatB and TatC subunits, and a separate TatA complex, containing only TatA subunits. Substrates initially bind to the TatABC complex, which probably triggers association of the separate TatA complex to form the active translocon.

The protein resides in the cell inner membrane. Functionally, part of the twin-arginine translocation (Tat) system that transports large folded proteins containing a characteristic twin-arginine motif in their signal peptide across membranes. Together with TatC, TatB is part of a receptor directly interacting with Tat signal peptides. TatB may form an oligomeric binding site that transiently accommodates folded Tat precursor proteins before their translocation. The polypeptide is Sec-independent protein translocase protein TatB (Acinetobacter baumannii (strain ATCC 17978 / DSM 105126 / CIP 53.77 / LMG 1025 / NCDC KC755 / 5377)).